The chain runs to 298 residues: 4-diphosphocytidyl-2-C-methyl-D-erythritol kinase (298 aa).

Residue Lys-15 is part of the active site. An ATP-binding site is contributed by 102–112 (PVAAGIGGGSS). Asp-142 is an active-site residue.

The protein belongs to the GHMP kinase family. IspE subfamily.

The catalysed reaction is 4-CDP-2-C-methyl-D-erythritol + ATP = 4-CDP-2-C-methyl-D-erythritol 2-phosphate + ADP + H(+). It participates in isoprenoid biosynthesis; isopentenyl diphosphate biosynthesis via DXP pathway; isopentenyl diphosphate from 1-deoxy-D-xylulose 5-phosphate: step 3/6. Functionally, catalyzes the phosphorylation of the position 2 hydroxy group of 4-diphosphocytidyl-2C-methyl-D-erythritol. In Hyphomonas neptunium (strain ATCC 15444), this protein is 4-diphosphocytidyl-2-C-methyl-D-erythritol kinase.